The primary structure comprises 185 residues: Casparian strip membrane protein 2 (185 aa).

The Cytoplasmic segment spans residues 1-25 (MKAVSIEAGEGSKAKRVHGVNRGIS). The chain crosses the membrane as a helical span at residues 26–46 (VFDLVLRIVALVGTLASAVAM). At 47 to 73 (GTADQALSFSTQIVNFEAQYDDIDAFK) the chain is on the extracellular side. Residues 74–94 (FFVVSNSITCVYLALSIPISI) form a helical membrane-spanning segment. The Cytoplasmic portion of the chain corresponds to 95–106 (FHIIRSRAGKSR). Residues 107-127 (VLLIVLDAIMLVFLTSGASAA) form a helical membrane-spanning segment. Residues 128 to 160 (AAIVYLAHNGNTSTNWFSICQQYTDFCQRSAGS) are Extracellular-facing. N-linked (GlcNAc...) asparagine glycosylation occurs at Asn-138. The helical transmembrane segment at 161 to 181 (LIGSFGAMALMVLLIILSSIA) threads the bilayer. Residues 182 to 185 (LSRR) lie on the Cytoplasmic side of the membrane.

It belongs to the Casparian strip membrane proteins (CASP) family. Homodimer and heterodimers.

The protein resides in the cell membrane. Functionally, regulates membrane-cell wall junctions and localized cell wall deposition. Required for establishment of the Casparian strip membrane domain (CSD) and the subsequent formation of Casparian strips, a cell wall modification of the root endodermis that determines an apoplastic barrier between the intraorganismal apoplasm and the extraorganismal apoplasm and prevents lateral diffusion. In Solanum demissum (Wild potato), this protein is Casparian strip membrane protein 2.